We begin with the raw amino-acid sequence, 906 residues long: Probable disease resistance RPP8-like protein 2 (906 aa).

The stretch at 15–68 (ELLSRESARLNGIDEQVDGLKRQLGRLQSLLKDADAKKNETERVRNFLEDVKDI) forms a coiled coil. Residues 144-454 (LQERQREIRQ…AEGIITPFHD (311 aa)) enclose the NB-ARC domain. 190-197 (GMGGIGKT) is a binding site for ATP. LRR repeat units lie at residues 573-597 (LPLL…SIGD), 598-621 (LIHL…LGNL), 623-644 (LLLC…NVLK), 646-671 (MQEL…DLVN), 672-696 (LESL…KLSV), 704-727 (ECTF…SFHD), 740-766 (LLVL…QYRF), 767-790 (PPHL…ILEK), 791-818 (LLHL…GFPQ), and 840-865 (MPCL…KYVT).

This sequence belongs to the disease resistance NB-LRR family. RPP8/HRT subfamily.

Potential disease resistance protein. The protein is Probable disease resistance RPP8-like protein 2 (RPP8L2) of Arabidopsis thaliana (Mouse-ear cress).